The chain runs to 380 residues: Outer mitochondrial transmembrane helix translocase (380 aa).

Over 1 to 18 (MLSDIPRDALLRPLTRNE) the chain is Mitochondrial intermembrane. The helical transmembrane segment at 19-37 (VVGMLVRLTVFGAATYYSI) threads the bilayer. At 38–380 (KWVVDALDPT…PANLREVPLD (343 aa)) the chain is on the cytoplasmic side. 136–143 (GPPGCGKT) is a binding site for ATP.

Belongs to the AAA ATPase family. MSP1 subfamily.

The protein localises to the mitochondrion outer membrane. It is found in the peroxisome membrane. Its subcellular location is the postsynaptic cell membrane. It carries out the reaction [protein]-with a C-terminal TM segment(out) + ATP + H2O = [protein]-with a C-terminal TM segment(in) + ADP + phosphate + H(+). Outer mitochondrial translocase required to remove mislocalized tail-anchored transmembrane proteins on mitochondria. Specifically recognizes and binds tail-anchored transmembrane proteins: acts as a dislocase that mediates the ATP-dependent extraction of mistargeted tail-anchored transmembrane proteins from the mitochondrion outer membrane. Also plays a critical role in regulating the surface expression of AMPA receptors (AMPAR), thereby regulating synaptic plasticity and learning and memory. In Danio rerio (Zebrafish), this protein is Outer mitochondrial transmembrane helix translocase.